Here is a 500-residue protein sequence, read N- to C-terminus: L-arabinose isomerase (500 aa).

The Mn(2+) site is built by Glu306, Glu333, His350, and His450.

The protein belongs to the arabinose isomerase family. In terms of assembly, homohexamer. The cofactor is Mn(2+).

The catalysed reaction is beta-L-arabinopyranose = L-ribulose. It participates in carbohydrate degradation; L-arabinose degradation via L-ribulose; D-xylulose 5-phosphate from L-arabinose (bacterial route): step 1/3. Functionally, catalyzes the conversion of L-arabinose to L-ribulose. This chain is L-arabinose isomerase, found in Salmonella choleraesuis (strain SC-B67).